Here is a 438-residue protein sequence, read N- to C-terminus: Plasmalemma vesicle-associated protein (438 aa).

Over 1–26 (MGLSMDRSPYSRTGDRDRGCWYYLRY) the chain is Cytoplasmic. A helical; Signal-anchor for type II membrane protein transmembrane segment spans residues 27–47 (FFLFVSLIQFLIILGLVLFMI). Topologically, residues 48-438 (YGNVHATTES…LVNPAVPPSG (391 aa)) are extracellular. N-linked (GlcNAc...) asparagine glycosylation is found at N82, N88, N112, and N150. The stretch at 289–383 (AGIERVTREN…TEVDVRISAL (95 aa)) forms a coiled coil. The interval 393-438 (PAIQPRLPGPPPNPPPIDPASLEEFKKRILESQRPPLVNPAVPPSG) is disordered. Pro residues-rich tracts occupy residues 399–410 (LPGPPPNPPPID) and 429–438 (LVNPAVPPSG).

As to quaternary structure, homodimer. In terms of tissue distribution, expressed in lung (alveolar endothelial and bronchial epithelial cells), kidney (endothelium of peritubular capillaries), spleen, liver, adrenal (endothelial cells of the zona reticularis of the cortex and chromaffin cells in the medulla), pancreas (islets of Langerhans), testis (germ cells, interstitial cells in neonatal testis and spermatids), ovary (stromal endothelial, thecal layer of developing follicles, luteal cells within the corpus luteum), intestine (endothelium of capillaries of the intestinal villi) and pituitary (pituicyte cells in the neural lobe) (at protein level). Expressed in lung, kidney, spleen, liver, adrenal, testis, heart, muscle, pituitary, thyroid and ovary.

It localises to the cell membrane. The protein localises to the membrane. It is found in the caveola. The protein resides in the cytoplasm. Its subcellular location is the perinuclear region. In terms of biological role, endothelial cell-specific membrane protein involved in the formation of the diaphragms that bridge endothelial fenestrae. It is also required for the formation of stomata of caveolae and transendothelial channels. Functions in microvascular permeability, endothelial fenestrae contributing to the passage of water and solutes and regulating transcellular versus paracellular flow in different organs. Plays a specific role in embryonic development. This chain is Plasmalemma vesicle-associated protein (Plvap), found in Rattus norvegicus (Rat).